A 773-amino-acid chain; its full sequence is E3 ubiquitin-protein ligase msl-2 (773 aa).

Residues Cys-41, Cys-44, Cys-59, His-61, Cys-64, Cys-67, Cys-78, and Cys-84 each contribute to the Zn(2+) site. Residues 41-85 (CVVCCQLLVDPYSPKGKRCQHNVCRLCLRGKKHLFPSCTQCEGCS) form an RING-type zinc finger. Residues 424–468 (VQTELQDAESLQKDFEDAKAAAEEAKEKEKDLHAISAELQKEDSD) are a coiled coil. A disordered region spans residues 460-525 (AELQKEDSDE…EKVKPPKPKC (66 aa)). The region spanning 520 to 571 (PPKPKCRCGISGSSNTLTTCRNSRCPCYKSYNSCAGCHCVCCKNPHKEDYVE) is the CXC MSL2-type domain. 9 residues coordinate Zn(2+): Cys-525, Cys-527, Cys-539, Cys-544, Cys-546, Cys-553, Cys-556, Cys-558, and Cys-561. Residues 571-773 (ESDEDDDLED…EEIMSGSDDL (203 aa)) form a C-terminal disordered region (CTD) region. The span at 572 to 581 (SDEDDDLEDF) shows a compositional bias: acidic residues. Residues 572-616 (SDEDDDLEDFEMPKDVPEPMTQSEEPVVAEPRQEENSMAPPDSSA) form a disordered region. The segment at 620–685 (LVPLNNLQQS…SLPQYAYIMP (66 aa)) is clamp-binding domain (CBD). The pro/Bas region stretch occupies residues 650 to 708 (QGSKPLDPVTVGFTIRVQLQHTDGFGSLPQYAYIMPTIDPPNPPAPSLSPPPPPAPDRE). The segment covering 687-704 (IDPPNPPAPSLSPPPPPA) has biased composition (pro residues). Residues 687–773 (IDPPNPPAPS…EEIMSGSDDL (87 aa)) are disordered. The span at 705–714 (PDREVIEPPA) shows a compositional bias: basic and acidic residues. Basic residues predominate over residues 715–726 (KKFRTSRTRRGR). Residues 742 to 759 (GSRSNSAAGDRSSATDNA) show a composition bias toward polar residues.

It belongs to the MSL2 family. As to quaternary structure, component of the male-specific lethal (MSL) histone acetyltransferase complex, composed of mof, mle, msl-1, msl-2 and msl-3 proteins, as well as roX1 and roX2 non-coding RNAs. When not associated with chromatin, the MSL complex associates with msl-2 mRNAs, possibly to regulate the amount of available MSL complex. Interacts with Clamp; promoting cooperative binding to DNA PionX sites and recruitment of the MSL complex to chromatin. Autoubiquitinated.

The protein resides in the nucleus. It localises to the chromosome. The enzyme catalyses S-ubiquitinyl-[E2 ubiquitin-conjugating enzyme]-L-cysteine + [acceptor protein]-L-lysine = [E2 ubiquitin-conjugating enzyme]-L-cysteine + N(6)-ubiquitinyl-[acceptor protein]-L-lysine.. The protein operates within protein modification; protein ubiquitination. Functionally, limiting component of the male-specific lethal (MSL) histone acetyltransferase complex, a multiprotein complex essential for elevating transcription of the single X chromosome in the male (X chromosome dosage compensation). The MSL complex specifically associates with the single X chromosome in males and mediates formation of H4K16ac, promoting a two-fold activation of X chromosome. Msl-2 is only produced in males, constituting the limiting component of the MSL complex. Within the MSL complex, msl-2 mediates the selective binding to the X chromosome and recruitment of the MSL complex via two different mechanisms. Recognizes DNA motifs that are enriched on X chromosome, named PionX sites, which are characterized by sequence features and distinct DNA conformation (base roll). Specific recognition of the X chromosome is also mediated by the formation of a gel-like state: msl-2 undergoes liquid-liquid phase separation upon binding to roX1 and roX2 non-coding RNAs, leading to nucleate the MSL complex on the X chromosome. Msl-2 is also required for translation and/or stability of msl-1 in males. Also acts as an E3 ubiquitin ligase: in complex with msl-1, mediates ubiquitination of histone H2B at 'Lys-34' (H2BK34Ub). Also catalyzes ubiquitination of msl-1, msl-3 and mof components of the MSL complex. In Drosophila melanogaster (Fruit fly), this protein is E3 ubiquitin-protein ligase msl-2.